Consider the following 292-residue polypeptide: 5,10-methylenetetrahydrofolate reductase (292 aa).

Catalysis depends on glutamate 26, which acts as the Proton donor/acceptor. Threonine 57 lines the NADH pocket. Positions 58, 60, 86, 116, 117, 118, 130, 150, 154, 157, 163, 166, 169, and 170 each coordinate FAD. Aspartate 118 serves as a coordination point for (6S)-5-methyl-5,6,7,8-tetrahydrofolate. Residue glutamine 181 coordinates NADH. The (6S)-5-methyl-5,6,7,8-tetrahydrofolate site is built by glutamine 181, glutamine 217, and arginine 277.

It belongs to the methylenetetrahydrofolate reductase family. FAD is required as a cofactor.

The catalysed reaction is (6S)-5-methyl-5,6,7,8-tetrahydrofolate + NAD(+) = (6R)-5,10-methylene-5,6,7,8-tetrahydrofolate + NADH + H(+). It participates in one-carbon metabolism; tetrahydrofolate interconversion. It functions in the pathway amino-acid biosynthesis; L-methionine biosynthesis via de novo pathway. Functionally, catalyzes the NADH-dependent reduction of 5,10-methylenetetrahydrofolate to 5-methyltetrahydrofolate. Is required to provide the methyl group necessary for methionine synthetase to convert homocysteine to methionine; the methyl group is given by 5-methyltetrahydrofolate. The chain is 5,10-methylenetetrahydrofolate reductase (metF) from Haemophilus influenzae (strain ATCC 51907 / DSM 11121 / KW20 / Rd).